The primary structure comprises 91 residues: Small ribosomal subunit protein bS18 (91 aa).

The protein belongs to the bacterial ribosomal protein bS18 family. Part of the 30S ribosomal subunit. Forms a tight heterodimer with protein bS6.

Its function is as follows. Binds as a heterodimer with protein bS6 to the central domain of the 16S rRNA, where it helps stabilize the platform of the 30S subunit. The protein is Small ribosomal subunit protein bS18 of Burkholderia lata (strain ATCC 17760 / DSM 23089 / LMG 22485 / NCIMB 9086 / R18194 / 383).